Here is a 612-residue protein sequence, read N- to C-terminus: Threonine--tRNA ligase (612 aa).

The interval 218-509 (DHRKLGVELG…LSEHFGGNFP (292 aa)) is catalytic. Zn(2+) is bound by residues Cys310, His361, and His486.

Belongs to the class-II aminoacyl-tRNA synthetase family. In terms of assembly, homodimer. Zn(2+) serves as cofactor.

Its subcellular location is the cytoplasm. It catalyses the reaction tRNA(Thr) + L-threonine + ATP = L-threonyl-tRNA(Thr) + AMP + diphosphate + H(+). Functionally, catalyzes the attachment of threonine to tRNA(Thr) in a two-step reaction: L-threonine is first activated by ATP to form Thr-AMP and then transferred to the acceptor end of tRNA(Thr). Also edits incorrectly charged L-seryl-tRNA(Thr). This Helicobacter pylori (strain P12) protein is Threonine--tRNA ligase.